Here is a 438-residue protein sequence, read N- to C-terminus: Xylose isomerase (438 aa).

Residues His100 and Asp103 contribute to the active site. Glu231, Glu267, His270, Asp295, Asp306, Asp308, and Asp338 together coordinate Mg(2+).

This sequence belongs to the xylose isomerase family. As to quaternary structure, homotetramer. Requires Mg(2+) as cofactor.

It localises to the cytoplasm. It carries out the reaction alpha-D-xylose = alpha-D-xylulofuranose. The polypeptide is Xylose isomerase (Caldanaerobacter subterraneus subsp. yonseiensis (Thermoanaerobacter yonseiensis)).